A 371-amino-acid chain; its full sequence is Cell division cycle-associated protein 7 (371 aa).

Disordered regions lie at residues 60-110 (TRSQ…EDES) and 140-188 (PGSF…SRIL). The span at 94–103 (PSENSVTDSN) shows a compositional bias: polar residues. At Ser-142 the chain carries Phosphoserine. An interaction with MYC region spans residues 146 to 170 (RHPLPGSDSQSRRPRRRTFPGVASR). A Nuclear localization signal motif is present at residues 160–176 (RRRTFPGVASRRNPERR). At Thr-163 the chain carries Phosphothreonine. Phosphoserine is present on Ser-190. Residue Lys-204 forms a Glycyl lysine isopeptide (Lys-Gly) (interchain with G-Cter in SUMO2) linkage. A mediates transcriptional activity region spans residues 247–371 (EEELENVCSN…SLKQEFEMQA (125 aa)).

As to quaternary structure, interacts with MYC (via C-terminus), YWHAE and YWHAZ. Post-translationally, phosphorylation at Thr-163 promotes interaction with YWHAE and YWHAZ, dissociation from MYC and sequestration in the cytoplasm. In vitro, phosphorylated at Thr-163 by AKT. As to expression, ubiquitous with higher level in thymus and small intestine. Overexpressed in a large number of tumors, in blood from patients with acute myelogenous leukemia (AML) and in chronic myelogenous leukemia (CML) blast crisis.

Its subcellular location is the nucleus. It localises to the cytoplasm. Participates in MYC-mediated cell transformation and apoptosis; induces anchorage-independent growth and clonogenicity in lymphoblastoid cells. Insufficient to induce tumorigenicity when overexpressed but contributes to MYC-mediated tumorigenesis. May play a role as transcriptional regulator. The polypeptide is Cell division cycle-associated protein 7 (CDCA7) (Homo sapiens (Human)).